The following is a 118-amino-acid chain: NAD(P)H-quinone oxidoreductase subunit M (118 aa).

The protein belongs to the complex I NdhM subunit family. NDH-1 can be composed of about 15 different subunits; different subcomplexes with different compositions have been identified which probably have different functions.

Its subcellular location is the cellular thylakoid membrane. It catalyses the reaction a plastoquinone + NADH + (n+1) H(+)(in) = a plastoquinol + NAD(+) + n H(+)(out). It carries out the reaction a plastoquinone + NADPH + (n+1) H(+)(in) = a plastoquinol + NADP(+) + n H(+)(out). In terms of biological role, NDH-1 shuttles electrons from an unknown electron donor, via FMN and iron-sulfur (Fe-S) centers, to quinones in the respiratory and/or the photosynthetic chain. The immediate electron acceptor for the enzyme in this species is believed to be plastoquinone. Couples the redox reaction to proton translocation, and thus conserves the redox energy in a proton gradient. Cyanobacterial NDH-1 also plays a role in inorganic carbon-concentration. This Trichormus variabilis (strain ATCC 29413 / PCC 7937) (Anabaena variabilis) protein is NAD(P)H-quinone oxidoreductase subunit M.